A 332-amino-acid chain; its full sequence is Fructose-1,6-bisphosphatase class 1 (332 aa).

Residues E89, D110, L112, and D113 each contribute to the Mg(2+) site. Residues 113 to 116 (DGSS), N206, Y239, 257 to 259 (YLY), and K269 contribute to the substrate site. E275 serves as a coordination point for Mg(2+).

Belongs to the FBPase class 1 family. As to quaternary structure, homotetramer. Requires Mg(2+) as cofactor.

The protein localises to the cytoplasm. The catalysed reaction is beta-D-fructose 1,6-bisphosphate + H2O = beta-D-fructose 6-phosphate + phosphate. The protein operates within carbohydrate biosynthesis; gluconeogenesis. This Shigella sonnei (strain Ss046) protein is Fructose-1,6-bisphosphatase class 1.